The primary structure comprises 308 residues: ADP-L-glycero-D-manno-heptose-6-epimerase (308 aa).

NADP(+)-binding positions include 10 to 11, 31 to 32, Lys-38, Lys-53, 75 to 79, and Asn-92; these read MI, DN, and EGACS. Tyr-140 serves as the catalytic Proton acceptor. NADP(+) is bound at residue Lys-144. Asn-169 serves as a coordination point for substrate. Val-170 and Lys-178 together coordinate NADP(+). Residue Lys-178 is the Proton acceptor of the active site. Substrate is bound by residues Ser-180, His-187, 201 to 204, Arg-209, and Tyr-272; that span reads FEGS.

Belongs to the NAD(P)-dependent epimerase/dehydratase family. HldD subfamily. Homopentamer. It depends on NADP(+) as a cofactor.

It carries out the reaction ADP-D-glycero-beta-D-manno-heptose = ADP-L-glycero-beta-D-manno-heptose. It participates in nucleotide-sugar biosynthesis; ADP-L-glycero-beta-D-manno-heptose biosynthesis; ADP-L-glycero-beta-D-manno-heptose from D-glycero-beta-D-manno-heptose 7-phosphate: step 4/4. Its function is as follows. Catalyzes the interconversion between ADP-D-glycero-beta-D-manno-heptose and ADP-L-glycero-beta-D-manno-heptose via an epimerization at carbon 6 of the heptose. The chain is ADP-L-glycero-D-manno-heptose-6-epimerase from Actinobacillus pleuropneumoniae serotype 5b (strain L20).